The primary structure comprises 370 residues: Phosphate-binding protein PstS 3 (370 aa).

Residues 1–22 (MKLNRFGAAVGVLAAGALVLSA) form the signal peptide. A lipid anchor (N-palmitoyl cysteine) is attached at C23. A lipid anchor (S-diacylglycerol cysteine) is attached at C23. Phosphate-binding positions include 56–58 (STA), S86, D104, and 191–193 (SGT).

Belongs to the PstS family. In terms of assembly, the complex is composed of two ATP-binding proteins (PstB), two transmembrane proteins (PstC and PstA) and a solute-binding protein (PstS).

The protein localises to the cell membrane. Functionally, part of the ABC transporter complex PstSACB involved in phosphate import. This Mycobacterium bovis (strain ATCC BAA-935 / AF2122/97) protein is Phosphate-binding protein PstS 3 (pstS3).